Here is a 401-residue protein sequence, read N- to C-terminus: Mannonate dehydratase (401 aa).

The protein belongs to the mannonate dehydratase family. Fe(2+) serves as cofactor. The cofactor is Mn(2+).

The enzyme catalyses D-mannonate = 2-dehydro-3-deoxy-D-gluconate + H2O. The protein operates within carbohydrate metabolism; pentose and glucuronate interconversion. Catalyzes the dehydration of D-mannonate. The polypeptide is Mannonate dehydratase (Brucella melitensis biotype 2 (strain ATCC 23457)).